A 342-amino-acid chain; its full sequence is RNA 3'-terminal phosphate cyclase (342 aa).

ATP contacts are provided by residues Q102 and 283–287 (HLADQ). H308 acts as the Tele-AMP-histidine intermediate in catalysis.

The protein belongs to the RNA 3'-terminal cyclase family. Type 1 subfamily.

Its subcellular location is the cytoplasm. The catalysed reaction is a 3'-end 3'-phospho-ribonucleotide-RNA + ATP = a 3'-end 2',3'-cyclophospho-ribonucleotide-RNA + AMP + diphosphate. Its function is as follows. Catalyzes the conversion of 3'-phosphate to a 2',3'-cyclic phosphodiester at the end of RNA. The mechanism of action of the enzyme occurs in 3 steps: (A) adenylation of the enzyme by ATP; (B) transfer of adenylate to an RNA-N3'P to produce RNA-N3'PP5'A; (C) and attack of the adjacent 2'-hydroxyl on the 3'-phosphorus in the diester linkage to produce the cyclic end product. The biological role of this enzyme is unknown but it is likely to function in some aspects of cellular RNA processing. The protein is RNA 3'-terminal phosphate cyclase of Pseudomonas fluorescens (strain ATCC BAA-477 / NRRL B-23932 / Pf-5).